Here is a 189-residue protein sequence, read N- to C-terminus: MEHKDNSKMYGTTILCIRRNNHVIIAGDGQVSLGHTVMKNSAKKVKRLANDTVITGFAGATADAFTLFERLEGKLEKHPGQLLRACVELAKDWRMDRYLRRLEAMMIVADKSVSLVISGNGDVLEPENGIAAIGSGGNYALAAAKALCESNDKFSQNMTLEYIVTTAMNIAAEICIYTNNNIIMEKIED.

Residue T12 is part of the active site. Na(+)-binding residues include A172, C175, and T178.

This sequence belongs to the peptidase T1B family. HslV subfamily. A double ring-shaped homohexamer of HslV is capped on each side by a ring-shaped HslU homohexamer. The assembly of the HslU/HslV complex is dependent on binding of ATP.

The protein localises to the cytoplasm. The catalysed reaction is ATP-dependent cleavage of peptide bonds with broad specificity.. Allosterically activated by HslU binding. Its function is as follows. Protease subunit of a proteasome-like degradation complex believed to be a general protein degrading machinery. This Ehrlichia ruminantium (strain Welgevonden) protein is ATP-dependent protease subunit HslV.